A 102-amino-acid chain; its full sequence is Small ribosomal subunit protein uS10 (102 aa).

It belongs to the universal ribosomal protein uS10 family. As to quaternary structure, part of the 30S ribosomal subunit.

Functionally, involved in the binding of tRNA to the ribosomes. The polypeptide is Small ribosomal subunit protein uS10 (Desulfitobacterium hafniense (strain DSM 10664 / DCB-2)).